The following is a 609-amino-acid chain: Arginine--tRNA ligase (609 aa).

Positions 114–124 (VNPNKELHVGH) match the 'HIGH' region motif.

This sequence belongs to the class-I aminoacyl-tRNA synthetase family. In terms of assembly, monomer.

The protein localises to the cytoplasm. The catalysed reaction is tRNA(Arg) + L-arginine + ATP = L-arginyl-tRNA(Arg) + AMP + diphosphate. The polypeptide is Arginine--tRNA ligase (Deinococcus radiodurans (strain ATCC 13939 / DSM 20539 / JCM 16871 / CCUG 27074 / LMG 4051 / NBRC 15346 / NCIMB 9279 / VKM B-1422 / R1)).